An 86-amino-acid chain; its full sequence is DNA-directed RNA polymerase subunit omega (86 aa).

The protein belongs to the RNA polymerase subunit omega family. The RNAP catalytic core consists of 2 alpha, 1 beta, 1 beta' and 1 omega subunit. When a sigma factor is associated with the core the holoenzyme is formed, which can initiate transcription.

The enzyme catalyses RNA(n) + a ribonucleoside 5'-triphosphate = RNA(n+1) + diphosphate. Its function is as follows. Promotes RNA polymerase assembly. Latches the N- and C-terminal regions of the beta' subunit thereby facilitating its interaction with the beta and alpha subunits. The sequence is that of DNA-directed RNA polymerase subunit omega from Psychrobacter sp. (strain PRwf-1).